The chain runs to 161 residues: Phosphopantetheine adenylyltransferase (161 aa).

Thr10 is a substrate binding site. ATP contacts are provided by residues Thr10 to Phe11 and His18. The substrate site is built by Lys42, Leu74, and Arg88. ATP contacts are provided by residues Gly89 to Arg91, Glu99, and Trp124 to Thr130.

It belongs to the bacterial CoaD family. In terms of assembly, homohexamer. It depends on Mg(2+) as a cofactor.

Its subcellular location is the cytoplasm. The enzyme catalyses (R)-4'-phosphopantetheine + ATP + H(+) = 3'-dephospho-CoA + diphosphate. The protein operates within cofactor biosynthesis; coenzyme A biosynthesis; CoA from (R)-pantothenate: step 4/5. Reversibly transfers an adenylyl group from ATP to 4'-phosphopantetheine, yielding dephospho-CoA (dPCoA) and pyrophosphate. This is Phosphopantetheine adenylyltransferase from Haemophilus ducreyi (strain 35000HP / ATCC 700724).